A 1300-amino-acid polypeptide reads, in one-letter code: CRISPR-associated endonuclease Cas12a (1300 aa).

Residues 1 to 24 (MSIYQEFVNKYSLSKTLRFELIPQ) form a wedge region 1 region. 2 recognition domain regions span residues 25 to 339 (GKTL…SFVI) and 340 to 591 (DKLE…QKPY). Binds crRNA alone and in crRNA-target DNA heteroduplex regions lie at residues 47 to 51 (YKKAK) and 182 to 186 (FHENR). A binds DNA in crRNA-target DNA heteroduplex region spans residues 301–305 (NEYIN). 2 binds crRNA in crRNA-target DNA heteroduplex regions span residues 326–329 (KQIL) and 538–541 (HKLK). A binds crRNA region spans residues 591 to 595 (YSDEK). The tract at residues 592 to 662 (SDEKFKLNFE…GYKKIVYKLL (71 aa)) is wedge region 2. Positions 662–679 (LPGANKMLPKVFFSAKSI) are LKL, important for PAM recognition and DNA unwinding. The segment at 663 to 762 (PGANKMLPKV…FYREVENQGY (100 aa)) is PAM-interacting domain (PI). Residues 671–677 (KVFFSAK) are binds DNA protospacer adjacent motif (PAM) on target DNA. Positions 692–704 (RNHSTHTKNGSPQ) are binds single-strand non-target DNA. Residues 763-892 (KLTFENISES…PITINFKSSG (130 aa)) form a wedge region 3 region. Binds crRNA stretches follow at residues 791–794 (KDFS) and 803–804 (LH). Active-site for pre-crRNA processing residues include His843, Lys852, and Lys869. 2 binds crRNA regions span residues 851–853 (NKN) and 865–873 (YDLIKDKRF). Residues 893 to 953 (ANKFNDEINL…IGNDRMKTNY (61 aa)) form a ruvC-I region. The For DNase activity of RuvC domain role is filled by Asp917. Residues 954-971 (HDKLAAIEKDRDSARKDW) form a bridge helix region. Residues 972–1078 (KKINNIKEMK…KQTGIIYYVP (107 aa)) form a ruvC-II region. Glu1006 serves as the catalytic For DNase activity of RuvC domain. A nuclease domain region spans residues 1079–1254 (AGFTSKICPV…QAPKNMPQDA (176 aa)). Asp1255 acts as the For DNase activity of RuvC domain in catalysis. The ruvC-III stretch occupies residues 1255 to 1300 (DANGAYHIGLKGLMLLGRIKNNQEGKKLNLVIKNEEYFEFVQNRNN).

Belongs to the CRISPR-associated endonuclease Cas12a family. Might be a homodimer. Might be a monomer. Ca(2+) serves as cofactor. The cofactor is Mg(2+).

The catalysed reaction is Endonucleolytic cleavage to 5'-phosphodinucleotide and 5'-phosphooligonucleotide end-products.. The enzyme catalyses RNA = a 5'-hydroxy-ribonucleotide + n nucleoside-2',3'-cyclophosphates.. Functionally, CRISPR (clustered regularly interspaced short palindromic repeat), is an adaptive immune system that provides protection against mobile genetic elements (viruses, transposable elements and conjugative plasmids). CRISPR clusters contain sequences complementary to antecedent mobile elements and target invading nucleic acids. CRISPR clusters are transcribed and processed into CRISPR RNA (crRNA). Has endonuclease activity on pre-crRNA and dsDNA, using different active sites. A single-RNA guided endonuclease that is also capable of guiding crRNA processing; correct processing of pre-crRNA requires only this protein and the CRISPR locus. pre-crRNA processing proceeds by an intramolecular nucleophilic attack on the scissile phosphate by the 2'-OH of the upstream ribonucleotide, the divalent cation (which is bound by the crRNA) is probably required for ordering the crRNA pseudoknot and/or increasing RNA binding. RNA mutagenesis studies show pre-crRNA cleavage is highly sequence- and structure-specific. Forms a complex with crRNA and complementary dsDNA, where the crRNA displaces the non-target DNA strand and directs endonucleolytic cleavage of both strands of the DNA. Cleavage results in staggered 5-base 5' overhangs 14-18 and 21-23 bases downstream of the PAM (protospacer adjacent motif) on the non-target and target strands respectively. Both target and non-target strand DNA are probably independently cleaved in the same active site. When this protein is expressed in E.coli it prevents plasmids homologous to the first CRISPR spacer from transforming, formally showing it is responsible for plasmid immunity. The chain is CRISPR-associated endonuclease Cas12a from Francisella tularensis subsp. novicida (strain U112).